Here is a 346-residue protein sequence, read N- to C-terminus: Upstream stimulatory factor 2 (346 aa).

2 disordered regions span residues 1–44 (MDML…PGAE) and 215–244 (APRT…NEVE). Residues 11-20 (AASATAAAAA) show a composition bias toward low complexity. Residues 226-244 (DGTRTPRDERRRAQHNEVE) are compositionally biased toward basic and acidic residues. One can recognise a bHLH domain in the interval 235–290 (RRRAQHNEVERRRRDKINNWIVQLSKIIPDCNADNSKTGASKGGILSKACDYIREL). The interval 307–328 (LQMDNELLRQQIEELKNENALL) is leucine-zipper.

Interacts with MAF. Efficient DNA binding requires dimerization with another bHLH protein. Binds DNA as a homodimer or a heterodimer (USF1/USF2). In vivo, the USF1/USF2A heterodimer represents over 66% of the usf binding activity whereas the USF1 and USF2A homodimers represent less than 10%. The USF1/USF2B heterodimer accounted for almost 15% in some cell. In terms of tissue distribution, ubiquitous.

The protein localises to the nucleus. Its function is as follows. Transcription factor that binds to a symmetrical DNA sequence (E-boxes) (5'-CACGTG-3') that is found in a variety of viral and cellular promoters. The chain is Upstream stimulatory factor 2 (USF2) from Homo sapiens (Human).